A 2661-amino-acid chain; its full sequence is 3-methylorcinaldehyde synthase tropA (2661 aa).

An N-terminal acylcarrier protein transacylase domain (SAT) region spans residues 14-271; the sequence is LLFGSQSLSF…HWSGHEAEVD (258 aa). Positions 380–796 constitute a Ketosynthase family 3 (KS3) domain; that stretch reads GDDIAIVGAS…GSNASMVITQ (417 aa). Catalysis depends on for beta-ketoacyl synthase activity residues Cys545, His680, and His719. The malonyl-CoA:ACP transacylase (MAT) domain stretch occupies residues 901 to 1211; the sequence is LCFGGQVSTF…QAMSITTDKG (311 aa). Ser988 (for acyl/malonyl transferase activity) is an active-site residue. Residues 1283-1425 form an N-terminal hotdog fold region; sequence PDTILSFVGY…GTLVVVPMED (143 aa). Positions 1283–1600 constitute a PKS/mFAS DH domain; that stretch reads PDTILSFVGY…FVRIPRKGLA (318 aa). The product template (PT) domain stretch occupies residues 1288 to 1599; that stretch reads SFVGYQDSNK…QFVRIPRKGL (312 aa). The Proton acceptor; for dehydratase activity role is filled by His1318. The C-terminal hotdog fold stretch occupies residues 1453-1600; sequence AEEILQGRTI…FVRIPRKGLA (148 aa). Residue Asp1509 is the Proton donor; for dehydratase activity of the active site. The interval 1614–1656 is disordered; it reads ATNAQSRAIPPPSTNTTQSSSQQTPIPKAAAPKKEKKRPGNPK. A compositionally biased stretch (low complexity) spans 1627–1643; that stretch reads TNTTQSSSQQTPIPKAA. Positions 1654–1731 constitute a Carrier 1 domain; the sequence is NPKLDVLPKL…QLVRVVESIV (78 aa). The residue at position 1691 (Ser1691) is an O-(pantetheine 4'-phosphoryl)serine. The segment at 1734–1762 is disordered; the sequence is EGSETSNLSSDDDDENGTPSTPETDLSDA. The region spanning 1764 to 1841 is the Carrier 2 domain; that stretch reads VDAVVDNAEL…DLRQTAPGAA (78 aa). Residue Ser1801 is modified to O-(pantetheine 4'-phosphoryl)serine. The interval 1998 to 2231 is methyltransferase (CMeT) domain; that stretch reads QYQNVNELIF…GFGRVDWSDG (234 aa). The interval 2271 to 2659 is thioesterase (TE) domain; sequence GVDLLSPAIR…FISYWRSISF (389 aa).

It participates in secondary metabolite biosynthesis. Non-reducing polyketide synthase; part of the gene cluster that mediates the biosynthesis of the tropolone class of fungal maleic anhydrides. The pathway begins with the synthesis of 3-methylorcinaldehyde by the non-reducing polyketide synthase (PKS) tropA. 3-methylorcinaldehyde is the substrate for the FAD-dependent monooxygenase tropB to yield a dearomatized hydroxycyclohexadione. The 2-oxoglutarate-dependent dioxygenase tropC then performs the oxidative ring expansion to provide the first tropolone metabolite stipitaldehyde. Trop D converts stipitaldehyde into stipitacetal which is in turn converted to stipitalide by the short-chain dehydrogenase/reductase tropE. The next steps involve tropF, tropG, tropH, tropI and tropJ to form successive tropolone maleic anhydrides including stipitaldehydic, stipitatonic and stipitatic acids. The sequence is that of 3-methylorcinaldehyde synthase tropA from Talaromyces stipitatus (strain ATCC 10500 / CBS 375.48 / QM 6759 / NRRL 1006) (Penicillium stipitatum).